A 163-amino-acid polypeptide reads, in one-letter code: ATP synthase subunit b', chloroplastic (163 aa).

The chain crosses the membrane as a helical span at residues Ala26–Phe46.

Belongs to the ATPase B chain family. In terms of assembly, F-type ATPases have 2 components, F(1) - the catalytic core - and F(0) - the membrane proton channel. F(1) has five subunits: alpha(3), beta(3), gamma(1), delta(1), epsilon(1). F(0) has four main subunits: a(1), b(1), b'(1) and c(10-14). The alpha and beta chains form an alternating ring which encloses part of the gamma chain. F(1) is attached to F(0) by a central stalk formed by the gamma and epsilon chains, while a peripheral stalk is formed by the delta, b and b' chains.

Its subcellular location is the plastid. The protein localises to the chloroplast thylakoid membrane. Its function is as follows. F(1)F(0) ATP synthase produces ATP from ADP in the presence of a proton or sodium gradient. F-type ATPases consist of two structural domains, F(1) containing the extramembraneous catalytic core and F(0) containing the membrane proton channel, linked together by a central stalk and a peripheral stalk. During catalysis, ATP synthesis in the catalytic domain of F(1) is coupled via a rotary mechanism of the central stalk subunits to proton translocation. Component of the F(0) channel, it forms part of the peripheral stalk, linking F(1) to F(0). The b'-subunit is a diverged and duplicated form of b found in plants and photosynthetic bacteria. This chain is ATP synthase subunit b', chloroplastic, found in Guillardia theta (Cryptophyte).